Consider the following 764-residue polypeptide: Thyrotropin receptor (764 aa).

Residues 1 to 20 (MRPPPLLHLALLLALPRSLG) form the signal peptide. Residues 21–413 (GKGCPSPPCE…EFNPCEDIMG (393 aa)) are Extracellular-facing. Cysteines 31 and 41 form a disulfide. Asn-77 and Asn-99 each carry an N-linked (GlcNAc...) asparagine glycan. LRR repeat units follow at residues 125 to 149 (LPLLKFLGIFNTGLGVFPDVTKVYS), 150 to 174 (TDVFFILEITDNPYMASIPANAFQG), 176 to 199 (CNETLTLKLYNNGFTSIQGHAFNG), 201 to 223 (KLDAVYLNKNKYLSAIDKDAFGG), 225 to 248 (YSGPTLLDVSYTSVTALPSKGLEH), and 250 to 271 (KELIARNTWTLKKLPLSLSFLH). 2 N-linked (GlcNAc...) asparagine glycosylation sites follow: Asn-177 and Asn-198. N-linked (GlcNAc...) asparagine glycosylation occurs at Asn-302. Tyr-385 carries the sulfotyrosine modification. A helical transmembrane segment spans residues 414-441 (YKFLRIVVWFVSLLALLGNVFVLIVLLT). Residues 442–450 (SHYKLTVPR) are Cytoplasmic-facing. A helical transmembrane segment spans residues 451-473 (FLMCNLAFADFCMGMYLLLIASV). The Extracellular segment spans residues 474–494 (DLYTHSEYYNHAIDWQTGPGC). A disulfide bridge connects residues Cys-494 and Cys-569. Residues 495–517 (NTAGFFTVFASELSVYTLTVITL) form a helical membrane-spanning segment. Over 518–537 (ERWYAITFAMRLDRKIRLRH) the chain is Cytoplasmic. The chain crosses the membrane as a helical span at residues 538–560 (AYAIMVGGWVCCFLLALLPLVGI). At 561-580 (SSYAKVSICLPMDTETPLAL) the chain is on the extracellular side. The helical transmembrane segment at 581–602 (AYIILVLLLNIVAFIIVCSCYV) threads the bilayer. Over 603–625 (KIYITVRNPQYNPGDKDTKIAKR) the chain is Cytoplasmic. Residues 626–649 (MAVLIFTDFMCMAPISFYALSALM) traverse the membrane as a helical segment. Topologically, residues 650–660 (NKPLITVTNSK) are extracellular. A helical transmembrane segment spans residues 661 to 682 (ILLVLFYPLNSCANPFLYAIFT). Topologically, residues 683-764 (KAFQRDVFIL…ISKEYNQTVL (82 aa)) are cytoplasmic. The short motif at 762 to 764 (TVL) is the PDZ-binding element.

Belongs to the G-protein coupled receptor 1 family. FSH/LSH/TSH subfamily. In terms of assembly, interacts with heterodimer GPHA2:GPHB5; this interaction stimulates cAMP production. Interacts (via the PDZ-binding motif) with SCRIB; regulates TSHR trafficking and function. In terms of processing, glycosylated. Post-translationally, sulfated. Sulfation on Tyr-385 plays a role in thyrotropin receptor binding and activation.

It localises to the cell membrane. Its subcellular location is the basolateral cell membrane. Functionally, receptor for the thyroid-stimulating hormone (TSH) or thyrotropin. Also acts as a receptor for the heterodimeric glycoprotein hormone (GPHA2:GPHB5) or thyrostimulin. The activity of this receptor is mediated by G proteins which activate adenylate cyclase. Plays a central role in controlling thyroid cell metabolism. The polypeptide is Thyrotropin receptor (TSHR) (Canis lupus familiaris (Dog)).